Reading from the N-terminus, the 607-residue chain is Frizzled and smoothened-like protein J (607 aa).

Residues 1–26 form the signal peptide; sequence MVSNKNLLPIIYIFFIILYFGDVAKS. Residues 27–247 lie on the Extracellular side of the membrane; that stretch reads QYFPLDKGAT…QWRNIYRLSD (221 aa). The 151-residue stretch at 32–182 folds into the FZ domain; it reads DKGATCQKYR…LSYTNTCENT (151 aa). Disulfide bonds link Cys-37–Cys-108, Cys-50–Cys-101, and Cys-127–Cys-179. N-linked (GlcNAc...) asparagine glycosylation is found at Asn-63, Asn-133, Asn-155, Asn-164, Asn-190, and Asn-222. The chain crosses the membrane as a helical span at residues 248–268; sequence VLSILSCILTLFLVITLGIIN. Residues 269 to 276 are Cytoplasmic-facing; sequence PKVSRFDK. A helical membrane pass occupies residues 277–297; sequence INVMLLSSIFLQAFSGALMTF. Asn-298 carries an N-linked (GlcNAc...) asparagine glycan. Residues 298–330 are Extracellular-facing; the sequence is NGTENTLCPEDGRFASYIDRMCVATGFLLHGSS. A helical membrane pass occupies residues 331-351; sequence LLVVQWWCVLSFEVWFTIFQV. At 352 to 358 the chain is on the cytoplasmic side; sequence GKKQKDR. The helical transmembrane segment at 359–379 threads the bilayer; it reads FIYYLVASLIIAWIPPIVSIS. Over 380 to 401 the chain is Extracellular; that stretch reads KNEYSGGPANPFCWLTTFNYRR. The helical transmembrane segment at 402-422 threads the bilayer; the sequence is FAFWLPMGIFLCLGGVFLILL. At 423–451 the chain is on the cytoplasmic side; sequence MREIYVIVSGNVQSTKESRFKVLKMEAKP. A helical transmembrane segment spans residues 452-472; the sequence is IISLIMYFSCLLYLFIYDQWI. Over 473-508 the chain is Extracellular; sequence NNHMHVYTDSIPSYALCLLTSTSTNDCLLKAPDITG. The helical transmembrane segment at 509 to 529 threads the bilayer; it reads LGYFIYSIRVFGVYAFIIYGI. Over 530 to 607 the chain is Cytoplasmic; sequence SKKTLQIWKY…VELDSNSDAL (78 aa). The short motif at 532-537 is the Lys-Thr-X-X-X-Trp motif, mediates interaction with the PDZ domain of Dvl family members element; sequence KTLQIW. The span at 559–575 shows a compositional bias: low complexity; the sequence is TAKSSNSNNSSTTNNIS. Residues 559-607 are disordered; sequence TAKSSNSNNSSTTNNISVKASSNMEYETRQENENGDSQSVELDSNSDAL. The segment covering 593 to 607 has biased composition (polar residues); sequence GDSQSVELDSNSDAL.

It belongs to the G-protein coupled receptor Fz/Smo family.

Its subcellular location is the membrane. This chain is Frizzled and smoothened-like protein J (fslJ-1), found in Dictyostelium discoideum (Social amoeba).